Here is a 382-residue protein sequence, read N- to C-terminus: Lipid-A-disaccharide synthase (382 aa).

This sequence belongs to the LpxB family.

The enzyme catalyses 2-N,3-O-bis[(3R)-3-hydroxytetradecanoyl]-alpha-D-glucosaminyl 1-phosphate + UDP-2-N,3-O-bis[(3R)-3-hydroxytetradecanoyl]-alpha-D-glucosamine = lipid A disaccharide (E. coli) + UDP + H(+). It carries out the reaction a lipid X + a UDP-2-N,3-O-bis[(3R)-3-hydroxyacyl]-alpha-D-glucosamine = a lipid A disaccharide + UDP + H(+). Its pathway is glycolipid biosynthesis; lipid IV(A) biosynthesis; lipid IV(A) from (3R)-3-hydroxytetradecanoyl-[acyl-carrier-protein] and UDP-N-acetyl-alpha-D-glucosamine: step 5/6. Functionally, condensation of UDP-2,3-diacylglucosamine and 2,3-diacylglucosamine-1-phosphate to form lipid A disaccharide, a precursor of lipid A, a phosphorylated glycolipid that anchors the lipopolysaccharide to the outer membrane of the cell. The sequence is that of Lipid-A-disaccharide synthase from Salmonella paratyphi B (strain ATCC BAA-1250 / SPB7).